A 438-amino-acid chain; its full sequence is Trigger factor (438 aa).

In terms of domain architecture, PPIase FKBP-type spans 160–245 (DDKVTIDFVG…VKKIQQAELP (86 aa)).

Belongs to the FKBP-type PPIase family. Tig subfamily.

The protein localises to the cytoplasm. It carries out the reaction [protein]-peptidylproline (omega=180) = [protein]-peptidylproline (omega=0). Functionally, involved in protein export. Acts as a chaperone by maintaining the newly synthesized protein in an open conformation. Functions as a peptidyl-prolyl cis-trans isomerase. This Francisella tularensis subsp. holarctica (strain OSU18) protein is Trigger factor.